The sequence spans 439 residues: Xylose isomerase (439 aa).

Catalysis depends on residues H101 and D104. Mg(2+)-binding residues include E232, E268, H271, D296, D307, D309, and D339.

The protein belongs to the xylose isomerase family. In terms of assembly, homotetramer. Requires Mg(2+) as cofactor.

Its subcellular location is the cytoplasm. The catalysed reaction is alpha-D-xylose = alpha-D-xylulofuranose. This is Xylose isomerase from Yersinia pseudotuberculosis serotype O:1b (strain IP 31758).